Here is a 360-residue protein sequence, read N- to C-terminus: Beta-1,3-N-acetylglucosaminyltransferase manic fringe (360 aa).

The Cytoplasmic portion of the chain corresponds to 1-5; the sequence is MILRR. Residues 6–26 form a helical; Signal-anchor for type II membrane protein membrane-spanning segment; it reads LFHVLPAFAFTLFILVLLDLQ. At 27 to 360 the chain is on the lumenal side; that stretch reads LRTRSDQKPQ…ALSWNQHVMH (334 aa). The disordered stretch occupies residues 51-74; that stretch reads TTAENQHRDGAHEKEKAEGQKWTE. Residues 55-74 show a composition bias toward basic and acidic residues; it reads NQHRDGAHEKEKAEGQKWTE. Arginine 100 contacts substrate. Intrachain disulfides connect cysteine 139-cysteine 150 and cysteine 168-cysteine 231. Aspartate 172 contacts substrate. Aspartate 173 lines the Mn(2+) pocket. Residue asparagine 214 is glycosylated (N-linked (GlcNAc...) asparagine). Residue aspartate 261 is part of the active site. A Mn(2+)-binding site is contributed by histidine 285. Cysteine 335 and cysteine 344 form a disulfide bridge.

This sequence belongs to the glycosyltransferase 31 family. Requires Mn(2+) as cofactor.

It is found in the golgi apparatus membrane. The enzyme catalyses 3-O-(alpha-L-fucosyl)-L-threonyl-[EGF-like domain protein] + UDP-N-acetyl-alpha-D-glucosamine = 3-O-(N-acetyl-beta-D-glucosaminyl-(1-&gt;3)-alpha-L-fucosyl)-L-threonyl-[EGF-like domain protein] + UDP + H(+). It carries out the reaction 3-O-(alpha-L-fucosyl)-L-seryl-[EGF-like domain protein] + UDP-N-acetyl-alpha-D-glucosamine = 3-O-(N-acetyl-beta-D-glucosaminyl-(1-&gt;3)-alpha-L-fucosyl)-L-seryl-[EGF-like domain protein] + UDP + H(+). Its function is as follows. Glycosyltransferase that initiates the elongation of O-linked fucose residues attached to EGF-like repeats in the extracellular domain of Notch molecules. The polypeptide is Beta-1,3-N-acetylglucosaminyltransferase manic fringe (Danio rerio (Zebrafish)).